Here is a 508-residue protein sequence, read N- to C-terminus: Ribose import ATP-binding protein RbsA 2 (508 aa).

2 consecutive ABC transporter domains span residues 6 to 241 (LTIH…VGRE) and 254 to 499 (ERSG…SGMG). An ATP-binding site is contributed by 38-45 (GENGAGKS).

It belongs to the ABC transporter superfamily. Ribose importer (TC 3.A.1.2.1) family. As to quaternary structure, the complex is composed of an ATP-binding protein (RbsA), two transmembrane proteins (RbsC) and a solute-binding protein (RbsB).

It is found in the cell inner membrane. The catalysed reaction is D-ribose(out) + ATP + H2O = D-ribose(in) + ADP + phosphate + H(+). In terms of biological role, part of the ABC transporter complex RbsABC involved in ribose import. Responsible for energy coupling to the transport system. This Rhizobium etli (strain ATCC 51251 / DSM 11541 / JCM 21823 / NBRC 15573 / CFN 42) protein is Ribose import ATP-binding protein RbsA 2.